Reading from the N-terminus, the 369-residue chain is Phosphoribosyl pyrophosphate synthase-associated protein 2 (369 aa).

M1 carries the N-acetylmethionine modification. Phosphoserine is present on residues S219, S227, and S233.

It belongs to the ribose-phosphate pyrophosphokinase family. Binds to PRPS1 and PRPS2.

Functionally, seems to play a negative regulatory role in 5-phosphoribose 1-diphosphate synthesis. The chain is Phosphoribosyl pyrophosphate synthase-associated protein 2 (PRPSAP2) from Bos taurus (Bovine).